A 184-amino-acid polypeptide reads, in one-letter code: Ribosome-recycling factor (184 aa).

Belongs to the RRF family.

Its subcellular location is the cytoplasm. In terms of biological role, responsible for the release of ribosomes from messenger RNA at the termination of protein biosynthesis. May increase the efficiency of translation by recycling ribosomes from one round of translation to another. The polypeptide is Ribosome-recycling factor (Cutibacterium acnes (strain DSM 16379 / KPA171202) (Propionibacterium acnes)).